The chain runs to 358 residues: Heavy metal-associated isoprenylated plant protein 37 (358 aa).

Residues 12-75 (IQTFSLRVNI…KLVKAGKHAE (64 aa)) form the HMA domain. Residues Cys23 and Cys26 each coordinate a metal cation. Disordered stretches follow at residues 100–194 (QKGQ…QNTQ) and 332–358 (QQQSSHSHATNMSSEEDAGNNNSCNIM). Over residues 128-141 (AEEDGDGSEEEDGD) the composition is skewed to acidic residues. Residues 148–181 (ANQQQQQNVVNAKKNSGGAAMNNGNNGVNAASKK) show a composition bias toward low complexity. 2 stretches are compositionally biased toward polar residues: residues 184–194 (QKQSNHNQNTQ) and 339–358 (HATNMSSEEDAGNNNSCNIM). Cys355 is modified (cysteine methyl ester). Cys355 carries S-farnesyl cysteine lipidation. Residues 356-358 (NIM) constitute a propeptide, removed in mature form.

This sequence belongs to the HIPP family.

Functionally, heavy-metal-binding protein. This is Heavy metal-associated isoprenylated plant protein 37 from Arabidopsis thaliana (Mouse-ear cress).